The primary structure comprises 1059 residues: Probable sucrose-phosphate synthase (1059 aa).

Disordered stretches follow at residues 95–145 (AVQR…VKSR), 671–695 (RHPQ…GDSL), 710–731 (DGER…NATD), and 748–769 (SKDT…ASKF). The span at 102–114 (RRLERERGRREAT) shows a compositional bias: basic and acidic residues. Residues 681 to 691 (GGESSESEESP) show a composition bias toward acidic residues.

Belongs to the glycosyltransferase 1 family. As to quaternary structure, homodimer or homotetramer.

The enzyme catalyses beta-D-fructose 6-phosphate + UDP-alpha-D-glucose = sucrose 6(F)-phosphate + UDP + H(+). The protein operates within glycan biosynthesis; sucrose biosynthesis; sucrose from D-fructose 6-phosphate and UDP-alpha-D-glucose: step 1/2. With respect to regulation, activity is regulated by phosphorylation and moderated by concentration of metabolites and light. Its function is as follows. Plays a role in photosynthetic sucrose synthesis by catalyzing the rate-limiting step of sucrose biosynthesis from UDP-glucose and fructose- 6-phosphate. Involved in the regulation of carbon partitioning in the leaves of plants. May regulate the synthesis of sucrose and therefore play a major role as a limiting factor in the export of photoassimilates out of the leaf. Plays a role for sucrose availability that is essential for plant growth and fiber elongation. This Vicia faba (Broad bean) protein is Probable sucrose-phosphate synthase (SPS).